The sequence spans 3744 residues: SAGA complex/NuA4 acetyltransferase complex subunit TRA1 (3744 aa).

An N-acetylserine modification is found at Ser2. 4 HEAT repeats span residues 2–40 (SLTEQIEQFASRFRDDDATLQSRYSTLSELYDIMELLNS), 46–92 (FFLQ…NQTF), 94–131 (PYAMEVLEFLLSVLPKENEENGILCMKVLTTLFKSFKS), and 135–172 (DKLDSFIRIIIQIYKNTPNLINQTFYEAGKAEQGDLDS). Positions 2 to 2598 (SLTEQIEQFA…KPYHTRQISS (2597 aa)) are HEAT. Ser172 is modified (phosphoserine). Residues 185-195 (FSKNDEEKDFP) show a composition bias toward basic and acidic residues. The segment at 185–212 (FSKNDEEKDFPSKQSSTEPRFENSTSSN) is disordered. Over residues 196-212 (SKQSSTEPRFENSTSSN) the composition is skewed to polar residues. HEAT repeat units follow at residues 247-284 (PEFTPLIMNLLNIQIKQQQEAREQAESRGEHFTSISTE), 319-357 (QDYVNFVPDLIIRLLQDCPSELSSARKELLHATRHILST), and 437-477 (KLLL…RFKT). A compositionally biased stretch (basic and acidic residues) spans 522 to 539 (LEPSDDDHLMPQPKKEDI). Residues 522 to 546 (LEPSDDDHLMPQPKKEDINDSPDVE) are disordered. Phosphoserine is present on Ser542. 20 HEAT repeats span residues 588–628 (RTLM…VFSY), 734–771 (PNFAGILLRFLKGKLKDLGNVDFNTSNVLIRLFKLSFM), 779–821 (INEV…SIGG), 829–867 (RSIKPILQVLLQSLNQMILTARLPHERELYVELCITVPV), 870–910 (SVLA…NLTA), 919–958 (PVIDDVSKALFNLLQPQPFNHAISHNVVRILGKLGGRNRQ), 1074–1112 (NQENLFLRLLESVFYATSIKELKDDAMDLLNNLLDHFCL), 1188–1225 (SFIPELAKQFIHLCYDETYYNKRGGVLGIKVLIDNVKS), 1283–1320 (KVLENTLTDIVCELSNANPKVRNACQKSLHTISNLTGI), 1369–1408 (TFNEELFRLLQESIVLADAEDESLSTNIQKTTEYSTSEQL), 1435–1472 (NIRIRILAVFFKTMLKTSPEIINTTYEALKGSLAENSK), 1476–1512 (ELLQNGLKPLLMNLSDHQKLTVPGLDALSKLLELLIA), 1693–1734 (LKLK…RFTE), 1739–1776 (DQNPLLLDFIDFSFSNGIKASYSLKKFIFHNIIASSNK), 1918–1955 (FPIKVVTQVFVALLRSSHVEARYLVKQSLDVLTPVLHE), 2115–2155 (ELGL…LDSE), 2182–2219 (ENLPTIQNLLEKCIKSDHHDVQEALQKVLQVIMKAIKA), 2230–2267 (SPGKTFIQMLTSVITQDLQETSSVTAGVTLAWVLFMNF), 2269–2307 (DNIVPLLTPLMKTFSKLCKDHLSISQPKDAMALEEARIT), and 2536–2573 (IISSDFIDSLIEIFYQDPKAIHRAWVTLFPQVYKSIPK). The tract at residues 2599–3744 (RTNVINMLLD…RTDVNFMPWF (1146 aa)) is head. Positions 2622–3177 (LVKYLAISYN…HFQLRTTKED (556 aa)) constitute an FAT domain. The PI3K/PI4K catalytic domain occupies 3374 to 3732 (FLPTVDFVRG…CIGSAVSPRN (359 aa)). Residues 3380 to 3386 (FVRGTHS) are G-loop. Positions 3563 to 3571 (MINNRTPHK) are catalytic loop. The activation loop stretch occupies residues 3600–3625 (LKNHDLSLPPDSPIFHNNEPVPFRLT). The FATC domain maps to 3712–3744 (TPTVTTQFILDCIGSAVSPRNLARTDVNFMPWF).

Belongs to the PI3/PI4-kinase family. TRA1 subfamily. Component of the 1.8 MDa SAGA (Spt-Ada-Gcn5 acetyltransferase) complex, which is composed of 19 subunits TRA1, SPT7, TAF5, NGG1/ADA3, SGF73, SPT20/ADA5, SPT8, TAF12, TAF6, HFI1/ADA1, UBP8, GCN5, ADA2, SPT3, SGF29, TAF10, TAF9, SGF11 and SUS1. The SAGA complex is composed of 4 modules, namely the HAT (histone acetyltransferase) module (GCN5, ADA2, NGG1/ADA3 and SGF29), the DUB (deubiquitinating) module (UBP8, SGF11, SGF73 and SUS1), the core or TAF (TBP-associated factor) module (TAF5, TAF6, TAF9, TAF10 and TAF12), and the Tra1 or SPT (Suppressor of Ty) module (TRA1, HFI1/ADA1, SPT3, SPT7, SPT8 and SPT20/ADA5). The Tra1/SPT module binds activators, the core module recruits TBP (TATA-binding protein), the HAT module contains the histone H3 acetyltransferase GCN5, and the DUB module comprises the histone H2B deubiquitinase UBP8. Also identified in an altered form of SAGA, named SALSA (SAGA altered, Spt8 absent) or SLIK (SAGA-like) complex, which contains a C-terminal truncated form of SPT7 and is missing SPT8. However, it has been shown that the SAGA and SAGA-like SALSA/SLIK transcriptional coactivators are structurally and biochemically equivalent. Component of the NuA4 acetyltransferase complex, which consists of the catalytic subunit ESA1 and the 12 non-catalytic subunits ACT1, ARP4, EAF1/VID21, SWC4/EAF2, EAF3, EAF5, EAF6, EAF7, EPL1, TRA1, YAF9 and YNG2. TRA1 is the scaffold subunit for binding to a variety of transcription activators or transcription factors to recruit NuA4 for targeted gene activation. Identified in the Ada.spt complex with NGG1/ADA3 and SPT7.

It localises to the nucleus. Its function is as follows. Essential scaffold subunit of the transcription coactivator SAGA complex. SAGA acts as a general cofactor required for essentially all RNA polymerase II transcription. At the promoters, SAGA is required for transcription pre-initiation complex (PIC) recruitment. It influences RNA polymerase II transcriptional activity through different activities such as TBP interaction (via core/TAF module) and promoter selectivity, interaction with transcription activators (via Tra1/SPT module), and chromatin modification through histone acetylation (via HAT module) and deubiquitination (via DUB module). SAGA preferentially acetylates histones H3 (to form H3K9ac, H3K14ac, H3K18ac and H3K23ac) and H2B and deubiquitinates histone H2B. SAGA interacts with DNA via upstream activating sequences (UASs). Also identified in a modified version of SAGA named SALSA or SLIK. The cleavage of SPT7 and the absence of the SPT8 subunit in SLIK neither drive any major conformational differences in its structure compared with SAGA, nor significantly affect HAT, DUB, or DNA-binding activities. Component of the NuA4 histone H4/H2A acetyltransferase involved in transcription and DNA repair. The protein is SAGA complex/NuA4 acetyltransferase complex subunit TRA1 of Saccharomyces cerevisiae (strain ATCC 204508 / S288c) (Baker's yeast).